The following is a 162-amino-acid chain: Epoxidase pydX (162 aa).

Residues 1 to 26 (MSLIALPLRLLRLLPAITSTWVLAFA) form the signal peptide. 2 consecutive transmembrane segments (helical) span residues 62-82 (WILIVVYPINYALGVVNLFVG) and 89-109 (TGAMSWYTIGLLFSLAHMGYM). N-linked (GlcNAc...) asparagine glycosylation is found at Asn127 and Asn139.

The protein belongs to the epoxidase xenD family.

The protein resides in the membrane. Its pathway is mycotoxin biosynthesis. Functionally, epoxidase; part of the gene cluster that mediates the biosynthesis of pyrrocidines, fungal natural products containing a macrocyclic para-cyclophane connected to a decahydrofluorene ring system that show potent antibiotic activities toward Gram-negative bacteria. Within the pathway, pydX functions synergistically with pydB, pydE and pydZ to form the cyclophane. The pathway begins with the PKS-NRPS pydA which, with the help of the trans-enoyl reductase pydC, synthesizes the polyketide-tyrosyl acyl thioester product which can be reductively off-loaded by the terminal reductase (R) domain in pydA. The alpha/beta hydrolase pydG is then required to catalyze the subsequent Knoevenagel condensation that affords the 3-pyrrolin-2-one ring, whereas the four proteins pydB, pydE, pydX and pydZ then function synergistically to form the cyclophane. PydB and the membrane-bound pydX and pydZ are lipid-binding proteins that can sequester and mold the pdyG product into the inverse S-shape. Binding of the medium chain reductase pydE to the complex would trigger the cascade oxidative cyclization. PydY is involved in the Diels-Alder cycloaddition that forms the decahydrofluorene core. Additional non-enzymatic hydroxylation yields pyrrocidine A2 which can be further reduced into pyrrocidine B by an endogenous reductase. In Acremonium sp, this protein is Epoxidase pydX.